A 104-amino-acid chain; its full sequence is Seminal ribonuclease (104 aa).

4 disulfide bridges follow: Cys-12/Cys-70, Cys-26/Cys-81, Cys-44/Cys-96, and Cys-51/Cys-58. Residues 27–31 (KPVNT), Lys-52, and Arg-71 contribute to the substrate site.

The protein belongs to the pancreatic ribonuclease family. As to quaternary structure, homodimer; disulfide-linked.

The protein resides in the secreted. It catalyses the reaction an [RNA] containing cytidine + H2O = an [RNA]-3'-cytidine-3'-phosphate + a 5'-hydroxy-ribonucleotide-3'-[RNA].. It carries out the reaction an [RNA] containing uridine + H2O = an [RNA]-3'-uridine-3'-phosphate + a 5'-hydroxy-ribonucleotide-3'-[RNA].. This chain is Seminal ribonuclease (SRN), found in Saiga tatarica (Saiga antelope).